The following is a 312-amino-acid chain: MKWSEISIHTTEEAVEAVSHILHEAGASGVAIEDPAELTKEREQQYGEIYALNPAEYPADGVVIKAYFPQTDSLQETIASLKSSIDVLPSYDIEIGTGNITINEVDEEDWATAWKKYYHPVQISDTFTIVPTWEEYTPSSPDEKIIELDPGMAFGTGTHPTTTMCIRALEKTVKPGDTVIDVGTGSGVLSIAAAKLGAASVQAYDLDPVAVESAEMNVRLNKTDDVVSVGQNSLLEGIEGPVDLIVANLLAEIILMFPEDAARVVKQGGLFITSGIIAAKEKTISEALEKAGFTIKEVLRMEDWVAIIAQNA.

S-adenosyl-L-methionine is bound by residues threonine 162, glycine 183, aspartate 205, and asparagine 248.

This sequence belongs to the methyltransferase superfamily. PrmA family.

It localises to the cytoplasm. The enzyme catalyses L-lysyl-[protein] + 3 S-adenosyl-L-methionine = N(6),N(6),N(6)-trimethyl-L-lysyl-[protein] + 3 S-adenosyl-L-homocysteine + 3 H(+). Functionally, methylates ribosomal protein L11. This is Ribosomal protein L11 methyltransferase from Bacillus cytotoxicus (strain DSM 22905 / CIP 110041 / 391-98 / NVH 391-98).